Consider the following 252-residue polypeptide: T-box transcription factor mls-1 (252 aa).

Residues 40-210 constitute a DNA-binding region (T-box); sequence LWRRFHNLGT…SNPFAKGFRE (171 aa).

In terms of assembly, may interact with unc-37.

It is found in the nucleus. Its function is as follows. Probable transcription factor required for the cell fate specification of non-striated uterine muscle precursor cells. Furthermore, may function with the transcriptional corepressor unc-37. This chain is T-box transcription factor mls-1, found in Caenorhabditis elegans.